Reading from the N-terminus, the 98-residue chain is Protein Frey 1 (98 aa).

Residues 13–29 (AGLSLFLHLILAVALLR) form a helical membrane-spanning segment. The segment at 60-87 (YGILPKHPRPRGPRPLLSRAQQRKRDGP) is disordered.

As to quaternary structure, interacts with SPPL2C (via active sites); the interaction stabilizes FREY1 protein and inhibits SPPL2C proteolytic activity. Interacts with IZUMO1; the interaction retains IZUMO1 at the endoplasmic reticulum membrane and coordinates IZUMO1 complex assembly.

The protein resides in the endoplasmic reticulum membrane. Functionally, key regulator for male fertility expressed transiently in round spermatids where it recruits IZUMO1 at the endoplasmic reticulum (ER) membrane and coordinates the oolemmal binding multimeric complex (IZUMO1 complex) assembly. Upon complete assembly of the IZUMO1 complex, its ER retention is released, facilitating IZUMO1 complex export to the acrosome. Through the interaction with SPPL2C, inhibits its intramembrane protease activity directly accessing the catalytic center of an I-CLiP. The polypeptide is Protein Frey 1 (Homo sapiens (Human)).